The chain runs to 487 residues: Glutamyl-tRNA(Gln) amidotransferase subunit A (487 aa).

Active-site charge relay system residues include Lys80 and Ser155. Ser179 functions as the Acyl-ester intermediate in the catalytic mechanism.

It belongs to the amidase family. GatA subfamily. As to quaternary structure, heterotrimer of A, B and C subunits.

The enzyme catalyses L-glutamyl-tRNA(Gln) + L-glutamine + ATP + H2O = L-glutaminyl-tRNA(Gln) + L-glutamate + ADP + phosphate + H(+). Allows the formation of correctly charged Gln-tRNA(Gln) through the transamidation of misacylated Glu-tRNA(Gln) in organisms which lack glutaminyl-tRNA synthetase. The reaction takes place in the presence of glutamine and ATP through an activated gamma-phospho-Glu-tRNA(Gln). This is Glutamyl-tRNA(Gln) amidotransferase subunit A from Leptospira interrogans serogroup Icterohaemorrhagiae serovar copenhageni (strain Fiocruz L1-130).